Here is a 170-residue protein sequence, read N- to C-terminus: Putative pre-16S rRNA nuclease (170 aa).

The disordered stretch occupies residues 1–29; sequence MVAASHRSPDRPGDPEGLEPGTGRGRRLG.

The protein belongs to the YqgF nuclease family.

It localises to the cytoplasm. In terms of biological role, could be a nuclease involved in processing of the 5'-end of pre-16S rRNA. This chain is Putative pre-16S rRNA nuclease, found in Mycobacterium ulcerans (strain Agy99).